We begin with the raw amino-acid sequence, 425 residues long: Glucan 1,3-beta-glucosidase (425 aa).

The first 17 residues, 1 to 17, serve as a signal peptide directing secretion; it reads MLLTFAPIFLLISSIVA. Glu-214 acts as the Proton donor in catalysis. Cystine bridges form between Cys-301–Cys-423 and Cys-326–Cys-352. Catalysis depends on Lys-328, which acts as the Nucleophile.

It belongs to the glycosyl hydrolase 5 (cellulase A) family.

The protein resides in the secreted. It catalyses the reaction Successive hydrolysis of beta-D-glucose units from the non-reducing ends of (1-&gt;3)-beta-D-glucans, releasing alpha-glucose.. Functionally, beta-glucanases participate in the metabolism of beta-glucan, the main structural component of the cell wall. It could also function biosynthetically as a transglycosylase. This chain is Glucan 1,3-beta-glucosidase (EXG1), found in Candida oleophila (Yeast).